The following is a 1072-amino-acid chain: Carbamoyl phosphate synthase large chain (1072 aa).

Residues 1-401 (MPKRLDINTI…SLLKAVRSLE (401 aa)) form a carboxyphosphate synthetic domain region. Residues arginine 129, arginine 169, glycine 175, glycine 176, lysine 208, isoleucine 210, glutamate 215, glycine 241, valine 242, histidine 243, glutamine 284, and glutamate 298 each coordinate ATP. The ATP-grasp 1 domain maps to 133–327 (RTLMQDLNEP…IAKLAAKIAV (195 aa)). Mg(2+) contacts are provided by glutamine 284, glutamate 298, and asparagine 300. Mn(2+) contacts are provided by glutamine 284, glutamate 298, and asparagine 300. Residues 402 to 546 (LGIYHLELDH…YSTYADENES (145 aa)) are oligomerization domain. The interval 547-929 (IVTDRKSVVV…ALYKGLVASG (383 aa)) is carbamoyl phosphate synthetic domain. Residues 671–861 (EAALTKLGIP…MANVATKVIL (191 aa)) enclose the ATP-grasp 2 domain. Arginine 707, arginine 746, glutamate 752, glycine 777, valine 778, histidine 779, serine 780, glutamine 820, and glutamate 832 together coordinate ATP. Residues glutamine 820, glutamate 832, and asparagine 834 each contribute to the Mg(2+) site. Residues glutamine 820, glutamate 832, and asparagine 834 each coordinate Mn(2+). One can recognise an MGS-like domain in the interval 930-1072 (INIPTHGSVI…QTKRHEVVHA (143 aa)). The segment at 930–1072 (INIPTHGSVI…QTKRHEVVHA (143 aa)) is allosteric domain.

This sequence belongs to the CarB family. Composed of two chains; the small (or glutamine) chain promotes the hydrolysis of glutamine to ammonia, which is used by the large (or ammonia) chain to synthesize carbamoyl phosphate. Tetramer of heterodimers (alpha,beta)4. The cofactor is Mg(2+). Requires Mn(2+) as cofactor.

The catalysed reaction is hydrogencarbonate + L-glutamine + 2 ATP + H2O = carbamoyl phosphate + L-glutamate + 2 ADP + phosphate + 2 H(+). It carries out the reaction hydrogencarbonate + NH4(+) + 2 ATP = carbamoyl phosphate + 2 ADP + phosphate + 2 H(+). Its pathway is amino-acid biosynthesis; L-arginine biosynthesis; carbamoyl phosphate from bicarbonate: step 1/1. The protein operates within pyrimidine metabolism; UMP biosynthesis via de novo pathway; (S)-dihydroorotate from bicarbonate: step 1/3. Functionally, large subunit of the glutamine-dependent carbamoyl phosphate synthetase (CPSase). CPSase catalyzes the formation of carbamoyl phosphate from the ammonia moiety of glutamine, carbonate, and phosphate donated by ATP, constituting the first step of 2 biosynthetic pathways, one leading to arginine and/or urea and the other to pyrimidine nucleotides. The large subunit (synthetase) binds the substrates ammonia (free or transferred from glutamine from the small subunit), hydrogencarbonate and ATP and carries out an ATP-coupled ligase reaction, activating hydrogencarbonate by forming carboxy phosphate which reacts with ammonia to form carbamoyl phosphate. This is Carbamoyl phosphate synthase large chain from Bacillus cereus (strain ATCC 14579 / DSM 31 / CCUG 7414 / JCM 2152 / NBRC 15305 / NCIMB 9373 / NCTC 2599 / NRRL B-3711).